The chain runs to 1159 residues: ATP-dependent helicase/deoxyribonuclease subunit B (1159 aa).

The 401-residue stretch at 1–401 folds into the UvrD-like helicase ATP-binding domain; it reads MSIRFVYGRS…LLKNWSYESV (401 aa). Position 8–15 (8–15) interacts with ATP; it reads GRSGTGKS. The UvrD-like helicase C-terminal domain occupies 279–582; the sequence is PYRFKGNLEL…NIGDIARIKG (304 aa). Positions 787, 1106, 1109, and 1115 each coordinate [4Fe-4S] cluster.

Belongs to the helicase family. AddB/RexB type 1 subfamily. In terms of assembly, heterodimer of AddA and AddB. Mg(2+) is required as a cofactor. Requires [4Fe-4S] cluster as cofactor.

Its function is as follows. The heterodimer acts as both an ATP-dependent DNA helicase and an ATP-dependent, dual-direction single-stranded exonuclease. Recognizes the chi site generating a DNA molecule suitable for the initiation of homologous recombination. The AddB subunit has 5' -&gt; 3' nuclease activity but not helicase activity. This Clostridium beijerinckii (strain ATCC 51743 / NCIMB 8052) (Clostridium acetobutylicum) protein is ATP-dependent helicase/deoxyribonuclease subunit B.